Consider the following 88-residue polypeptide: Small ribosomal subunit protein bS20 (88 aa).

Belongs to the bacterial ribosomal protein bS20 family.

Its function is as follows. Binds directly to 16S ribosomal RNA. The sequence is that of Small ribosomal subunit protein bS20 from Nitrobacter winogradskyi (strain ATCC 25391 / DSM 10237 / CIP 104748 / NCIMB 11846 / Nb-255).